The following is a 233-amino-acid chain: Putative peroxiredoxin (233 aa).

The Thioredoxin domain occupies Ala41–Phe200. The Cysteine sulfenic acid (-SOH) intermediate role is filled by Cys87.

This sequence belongs to the peroxiredoxin family. AhpC/Prx1 subfamily. In terms of assembly, homodimer; disulfide-linked, upon oxidation.

Its subcellular location is the cell membrane. The catalysed reaction is a hydroperoxide + [thioredoxin]-dithiol = an alcohol + [thioredoxin]-disulfide + H2O. Thiol-specific peroxidase that catalyzes the reduction of hydrogen peroxide and organic hydroperoxides to water and alcohols, respectively. Plays a role in cell protection against oxidative stress by detoxifying peroxides and as sensor of hydrogen peroxide-mediated signaling events. The protein is Putative peroxiredoxin of Entamoeba histolytica (strain ATCC 30459 / HM-1:IMSS / ABRM).